A 419-amino-acid polypeptide reads, in one-letter code: Gamma-glutamyl phosphate reductase (419 aa).

It belongs to the gamma-glutamyl phosphate reductase family.

Its subcellular location is the cytoplasm. The catalysed reaction is L-glutamate 5-semialdehyde + phosphate + NADP(+) = L-glutamyl 5-phosphate + NADPH + H(+). It participates in amino-acid biosynthesis; L-proline biosynthesis; L-glutamate 5-semialdehyde from L-glutamate: step 2/2. Its function is as follows. Catalyzes the NADPH-dependent reduction of L-glutamate 5-phosphate into L-glutamate 5-semialdehyde and phosphate. The product spontaneously undergoes cyclization to form 1-pyrroline-5-carboxylate. This Maridesulfovibrio salexigens (strain ATCC 14822 / DSM 2638 / NCIMB 8403 / VKM B-1763) (Desulfovibrio salexigens) protein is Gamma-glutamyl phosphate reductase.